The chain runs to 267 residues: Hemin import ATP-binding protein HmuV (267 aa).

The ABC transporter domain maps to leucine 3–arginine 243. Glycine 35–serine 42 contacts ATP.

Belongs to the ABC transporter superfamily. Heme (hemin) importer (TC 3.A.1.14.5) family. In terms of assembly, the complex is composed of two ATP-binding proteins (HmuV), two transmembrane proteins (HmuU) and a solute-binding protein (HmuT).

It is found in the cell inner membrane. In terms of biological role, part of the ABC transporter complex HmuTUV involved in hemin import. Responsible for energy coupling to the transport system. The polypeptide is Hemin import ATP-binding protein HmuV (Myxococcus xanthus (strain DK1622)).